The primary structure comprises 869 residues: DNA mismatch repair protein MutS (869 aa).

Residue 602 to 609 coordinates ATP; it reads GPNMSGKS.

The protein belongs to the DNA mismatch repair MutS family.

This protein is involved in the repair of mismatches in DNA. It is possible that it carries out the mismatch recognition step. This protein has a weak ATPase activity. In Bacillus licheniformis (strain ATCC 14580 / DSM 13 / JCM 2505 / CCUG 7422 / NBRC 12200 / NCIMB 9375 / NCTC 10341 / NRRL NRS-1264 / Gibson 46), this protein is DNA mismatch repair protein MutS.